Consider the following 934-residue polypeptide: Bifunctional uridylyltransferase/uridylyl-removing enzyme (934 aa).

Positions 1 to 379 are uridylyltransferase; that stretch reads MSAHDLKLEE…TFSRRKRKLS (379 aa). The segment at 380 to 736 is uridylyl-removing; the sequence is ADGDFVSENH…AKPHTFEAVT (357 aa). Residues 496-613 form the HD domain; it reads VDEHLLRCIA…IDFADTVQTM (118 aa). ACT domains follow at residues 737–819 and 848–931; these read EITV…VLAK and VIEV…RSSQ.

Belongs to the GlnD family. Mg(2+) is required as a cofactor.

The enzyme catalyses [protein-PII]-L-tyrosine + UTP = [protein-PII]-uridylyl-L-tyrosine + diphosphate. It carries out the reaction [protein-PII]-uridylyl-L-tyrosine + H2O = [protein-PII]-L-tyrosine + UMP + H(+). With respect to regulation, uridylyltransferase (UTase) activity is inhibited by glutamine, while glutamine activates uridylyl-removing (UR) activity. Modifies, by uridylylation and deuridylylation, the PII regulatory proteins (GlnB and homologs), in response to the nitrogen status of the cell that GlnD senses through the glutamine level. Under low glutamine levels, catalyzes the conversion of the PII proteins and UTP to PII-UMP and PPi, while under higher glutamine levels, GlnD hydrolyzes PII-UMP to PII and UMP (deuridylylation). Thus, controls uridylylation state and activity of the PII proteins, and plays an important role in the regulation of nitrogen assimilation and metabolism. The protein is Bifunctional uridylyltransferase/uridylyl-removing enzyme of Brucella anthropi (strain ATCC 49188 / DSM 6882 / CCUG 24695 / JCM 21032 / LMG 3331 / NBRC 15819 / NCTC 12168 / Alc 37) (Ochrobactrum anthropi).